The primary structure comprises 342 residues: Phosphate acyltransferase (342 aa).

Belongs to the PlsX family. As to quaternary structure, homodimer. Probably interacts with PlsY.

It is found in the cytoplasm. It carries out the reaction a fatty acyl-[ACP] + phosphate = an acyl phosphate + holo-[ACP]. Its pathway is lipid metabolism; phospholipid metabolism. Its function is as follows. Catalyzes the reversible formation of acyl-phosphate (acyl-PO(4)) from acyl-[acyl-carrier-protein] (acyl-ACP). This enzyme utilizes acyl-ACP as fatty acyl donor, but not acyl-CoA. This Leuconostoc mesenteroides subsp. mesenteroides (strain ATCC 8293 / DSM 20343 / BCRC 11652 / CCM 1803 / JCM 6124 / NCDO 523 / NBRC 100496 / NCIMB 8023 / NCTC 12954 / NRRL B-1118 / 37Y) protein is Phosphate acyltransferase.